The primary structure comprises 199 residues: Interferon kappa (199 aa).

The first 21 residues, 1 to 21 (MTPKFLWLVALVALYIPPIQS), serve as a signal peptide directing secretion. 2 cysteine pairs are disulfide-bonded: Cys-24–Cys-119 and Cys-49–Cys-162.

It belongs to the alpha/beta interferon family. As to expression, expressed at low levels in peritoneal macrophages.

The protein localises to the secreted. Its function is as follows. May play a role in the regulation of immune cell function. This chain is Interferon kappa (Ifnk), found in Mus musculus (Mouse).